Reading from the N-terminus, the 496-residue chain is Mothers against decapentaplegic homolog 6 (496 aa).

The span at 1–15 (MFRSKRSGLVRRLWR) shows a compositional bias: basic residues. 2 disordered regions span residues 1–116 (MFRS…PGWL) and 136–156 (GAPRDASDPLAGAALEPAGGG). Residues Arg75 and Arg82 each carry the dimethylated arginine; alternate modification. Omega-N-methylarginine; alternate occurs at positions 75 and 82. Positions 148-275 (AALEPAGGGR…FSRLCGPESP (128 aa)) constitute an MH1 domain. A Glycyl lysine isopeptide (Lys-Gly) (interchain with G-Cter in ubiquitin) cross-link involves residue Lys173. Zn(2+) contacts are provided by Cys205, Cys247, Cys260, and His265. The region spanning 331-496 (WCSVAYWEHR…WLEILLNNPR (166 aa)) is the MH2 domain. Residue Ser435 is modified to Phosphoserine; by PRKX; in vitro.

This sequence belongs to the dwarfin/SMAD family. As to quaternary structure, interacts with NEDD4L. Interacts with WWP1. Interacts with STAMBP and PRKX. Interacts with RNF111 and AXIN1. Interacts with TGF-beta type I receptor superfamily members, including ACVR1B, BMPR1B and TGFBR1. In response to BMP2, but not to TGFB treatment, interacts with SMAD1, but not with SMAD2, nor with SMAD4; this interaction may inhibit SMAD1 binding to SMAD4. Interacts with HOXC8 and HOXC9. Interacts with PELI1; this interaction interferes with PELI1 complex formation with TRAF6, IRAK1, IRAK4 and MYD88 in response to IL1B and hence negatively regulates IL1R-TLR signaling. Interacts with TSC22D1/TSC-22. Post-translationally, phosphorylated by BMP type 1 receptor kinase and by PRKX. Monoubiquitinated at Lys-173 by the E2/E3 hybrid ubiquitin-protein ligase UBE2O, leading to reduced binding affinity for the activated BMP type I receptor ACVR1/ALK2, thereby enhancing BMP7 and regulating adipocyte differentiation. Ubiquitinated by WWP1. Ubiquitinated by ARK2C, promoting proteasomal degradation, leading to enhance the BMP-Smad signaling. In terms of processing, arginine methylation by PRMT1, which is recruited by BMPR2, initiates BMP-Induced signaling and induces dissociation from the BMPR1B receptor at the cell surface leading to derepress downstream Smad1/Smad5 signaling. Expressed in the brain, heart, ovary, peripheral blood leukocytes, small intestine, spleen, thymus, bone marrow, fetal liver and lymph nodes.

The protein localises to the nucleus. Transforming growth factor-beta superfamily receptors signaling occurs through the Smad family of intracellular mediators. SMAD6 is an inhibitory Smad (i-Smad) that negatively regulates signaling downstream of type I transforming growth factor-beta. Acts as a mediator of TGF-beta and BMP anti-inflammatory activities. Suppresses IL1R-TLR signaling through its direct interaction with PEL1, preventing NF-kappa-B activation, nuclear transport and NF-kappa-B-mediated expression of pro-inflammatory genes. Blocks the BMP-SMAD1 signaling pathway by competing with SMAD4 for receptor-activated SMAD1-binding. Binds to regulatory elements in target promoter regions. The sequence is that of Mothers against decapentaplegic homolog 6 (SMAD6) from Homo sapiens (Human).